A 151-amino-acid polypeptide reads, in one-letter code: Ribonuclease H (151 aa).

The 142-residue stretch at 5–146 folds into the RNase H type-1 domain; that stretch reads ALPHVTIFTD…ADQLAREGVA (142 aa). Residues D14, E52, D74, and D138 each coordinate Mg(2+).

Belongs to the RNase H family. In terms of assembly, monomer. The cofactor is Mg(2+).

The protein localises to the cytoplasm. It catalyses the reaction Endonucleolytic cleavage to 5'-phosphomonoester.. Functionally, endonuclease that specifically degrades the RNA of RNA-DNA hybrids. This is Ribonuclease H from Nitrobacter hamburgensis (strain DSM 10229 / NCIMB 13809 / X14).